Reading from the N-terminus, the 89-residue chain is UPF0213 protein HQ_3675A (89 aa).

The GIY-YIG domain occupies 3-78 (DYHYVYIVEC…KSYTREKKQQ (76 aa)).

This sequence belongs to the UPF0213 family.

The polypeptide is UPF0213 protein HQ_3675A (Haloquadratum walsbyi (strain DSM 16790 / HBSQ001)).